The sequence spans 490 residues: MCSHDPLHFVVIPFMAQGHMIPLVDISRLLSQRQGVTVCIITTTQNVAKIKTSLSFSSLFATINIVEVKFLSQQTGLPEGCESLDMLASMGDMVKFFDAANSLEEQVEKAMEEMVQPRPSCIIGDMSLPFTSRLAKKFKIPKLIFHGFSCFSLMSIQVVRESGILKMIESNDEYFDLPGLPDKVEFTKPQVSVLQPVEGNMKESTAKIIEADNDSYGVIVNTFEELEVDYAREYRKARAGKVWCVGPVSLCNRLGLDKAKRGDKASIGQDQCLQWLDSQETGSVLYVCLGSLCNLPLAQLKELGLGLEASNKPFIWVIREWGKYGDLANWMQQSGFEERIKDRGLVIKGWAPQVFILSHASIGGFLTHCGWNSTLEGITAGVPLLTWPLFAEQFLNEKLVVQILKAGLKIGVEKLMKYGKEEEIGAMVSRECVRKAVDELMGDSEEAEERRRKVTELSDLANKALEKGGSSDSNITLLIQDIMEQSQNQF.

Residues Ser291, 351–353 (APQ), 368–376 (HCGWNSTLE), and 390–393 (FAEQ) each bind UDP-alpha-D-glucose.

It belongs to the UDP-glycosyltransferase family.

The chain is UDP-glycosyltransferase 73C7 (UGT73C7) from Arabidopsis thaliana (Mouse-ear cress).